A 198-amino-acid chain; its full sequence is Crinkler effector protein BLC01 (198 aa).

The first 15 residues, 1–15 (MMVKLICAIVDIAGA), serve as a signal peptide directing secretion. The segment at 16-55 (AFPIDIDTNELVGDFKKVIKAENSRTIACDANDLRLFLAK) is LQLFLAK domain. The tract at residues 56–113 (TDGRWLTEFEVQNGVADISVFEELDVVGAPLNMIGLSEETVSSVAITKELVKAKKTPL) is DWL domain. Residues 114–119 (HVLVVP) carry the HVLVXXP motif motif.

This sequence belongs to the Crinkler effector family.

The protein resides in the secreted. Its subcellular location is the host cell. Functionally, secreted effector that elicits necrosis in host plants, a characteristic of plant innate immunity. The chain is Crinkler effector protein BLC01 from Bremia lactucae (Lettuce downy mildew).